An 86-amino-acid chain; its full sequence is Protein Tat (86 aa).

Positions M1–N24 are interaction with human CREBBP. Residues M1 to G48 form a transactivation region. Residues C22, C25, and C27 each contribute to the Zn(2+) site. The interval C22–C37 is cysteine-rich. K28 bears the N6-acetyllysine; by host PCAF mark. Zn(2+)-binding residues include C30, H33, C34, and C37. The segment at F38–G48 is core. Basic residues predominate over residues G48–A58. Residues G48–E86 are disordered. Positions R49–R57 match the Nuclear localization signal, RNA-binding (TAR), and protein transduction motif. Positions R49–E86 are interaction with the host capping enzyme RNGTT. Residues K50 and K51 each carry the N6-acetyllysine; by host EP300 and GCN5L2 modification. Asymmetric dimethylarginine; by host PRMT6 is present on residues R52 and R53. Residues Q60–G79 show a composition bias toward polar residues. Residue K71 forms a Glycyl lysine isopeptide (Lys-Gly) (interchain with G-Cter in ubiquitin) linkage. Residues R78 to D80 carry the Cell attachment site motif.

The protein belongs to the lentiviruses Tat family. In terms of assembly, interacts with host CCNT1. Associates with the P-TEFb complex composed at least of Tat, P-TEFb (CDK9 and CCNT1), TAR RNA, RNA Pol II. Recruits the HATs CREBBP, TAF1/TFIID, EP300, PCAF and GCN5L2. Interacts with host KAT5/Tip60; this interaction targets the latter to degradation. Interacts with the host deacetylase SIRT1. Interacts with host capping enzyme RNGTT; this interaction stimulates RNGTT. Binds to host KDR, and to the host integrins ITGAV/ITGB3 and ITGA5/ITGB1. Interacts with host KPNB1/importin beta-1 without previous binding to KPNA1/importin alpha-1. Interacts with EIF2AK2. Interacts with host nucleosome assembly protein NAP1L1; this interaction may be required for the transport of Tat within the nucleus, since the two proteins interact at the nuclear rim. Interacts with host C1QBP/SF2P32; this interaction involves lysine-acetylated Tat. Interacts with the host chemokine receptors CCR2, CCR3 and CXCR4. Interacts with host DPP4/CD26; this interaction may trigger an anti-proliferative effect. Interacts with host LDLR. Interacts with the host extracellular matrix metalloproteinase MMP1. Interacts with host PRMT6; this interaction mediates Tat's methylation. Interacts with, and is ubiquitinated by MDM2/Hdm2. Interacts with host PSMC3 and HTATIP2. Interacts with STAB1; this interaction may overcome SATB1-mediated repression of IL2 and IL2RA (interleukin) in T cells by binding to the same domain than HDAC1. Interacts (when acetylated) with human CDK13, thereby increasing HIV-1 mRNA splicing and promoting the production of the doubly spliced HIV-1 protein Nef. Interacts with host TBP; this interaction modulates the activity of transcriptional pre-initiation complex. Interacts with host RELA. Interacts with host PLSCR1; this interaction negatively regulates Tat transactivation activity by altering its subcellular distribution. Asymmetrical arginine methylation by host PRMT6 seems to diminish the transactivation capacity of Tat and affects the interaction with host CCNT1. Post-translationally, acetylation by EP300, CREBBP, GCN5L2/GCN5 and PCAF regulates the transactivation activity of Tat. EP300-mediated acetylation of Lys-50 promotes dissociation of Tat from the TAR RNA through the competitive binding to PCAF's bromodomain. In addition, the non-acetylated Tat's N-terminus can also interact with PCAF. PCAF-mediated acetylation of Lys-28 enhances Tat's binding to CCNT1. Lys-50 is deacetylated by SIRT1. In terms of processing, polyubiquitination by host MDM2 does not target Tat to degradation, but activates its transactivation function and fosters interaction with CCNT1 and TAR RNA. Phosphorylated by EIF2AK2 on serine and threonine residues adjacent to the basic region important for TAR RNA binding and function. Phosphorylation of Tat by EIF2AK2 is dependent on the prior activation of EIF2AK2 by dsRNA.

It is found in the host nucleus. The protein localises to the host nucleolus. Its subcellular location is the host cytoplasm. The protein resides in the secreted. In terms of biological role, transcriptional activator that increases RNA Pol II processivity, thereby increasing the level of full-length viral transcripts. Recognizes a hairpin structure at the 5'-LTR of the nascent viral mRNAs referred to as the transactivation responsive RNA element (TAR) and recruits the cyclin T1-CDK9 complex (P-TEFb complex) that will in turn hyperphosphorylate the RNA polymerase II to allow efficient elongation. The CDK9 component of P-TEFb and other Tat-activated kinases hyperphosphorylate the C-terminus of RNA Pol II that becomes stabilized and much more processive. Other factors such as HTATSF1/Tat-SF1, SUPT5H/SPT5, and HTATIP2 are also important for Tat's function. Besides its effect on RNA Pol II processivity, Tat induces chromatin remodeling of proviral genes by recruiting the histone acetyltransferases (HATs) CREBBP, EP300 and PCAF to the chromatin. This also contributes to the increase in proviral transcription rate, especially when the provirus integrates in transcriptionally silent region of the host genome. To ensure maximal activation of the LTR, Tat mediates nuclear translocation of NF-kappa-B by interacting with host RELA. Through its interaction with host TBP, Tat may also modulate transcription initiation. Tat can reactivate a latently infected cell by penetrating in it and transactivating its LTR promoter. In the cytoplasm, Tat is thought to act as a translational activator of HIV-1 mRNAs. Extracellular circulating Tat can be endocytosed by surrounding uninfected cells via the binding to several surface receptors such as CD26, CXCR4, heparan sulfate proteoglycans (HSPG) or LDLR. Neurons are rarely infected, but they internalize Tat via their LDLR. Through its interaction with nuclear HATs, Tat is potentially able to control the acetylation-dependent cellular gene expression. Modulates the expression of many cellular genes involved in cell survival, proliferation or in coding for cytokines or cytokine receptors. Tat plays a role in T-cell and neurons apoptosis. Tat induced neurotoxicity and apoptosis probably contribute to neuroAIDS. Circulating Tat also acts as a chemokine-like and/or growth factor-like molecule that binds to specific receptors on the surface of the cells, affecting many cellular pathways. In the vascular system, Tat binds to ITGAV/ITGB3 and ITGA5/ITGB1 integrins dimers at the surface of endothelial cells and competes with bFGF for heparin-binding sites, leading to an excess of soluble bFGF. This chain is Protein Tat, found in Human immunodeficiency virus type 1 group M subtype B (isolate PCV12) (HIV-1).